The chain runs to 312 residues: Zinc transporter ZitB (312 aa).

Helical transmembrane passes span 16–36 (LLIA…GGWL), 40–60 (LALL…FIAL), 81–101 (LTTL…ILIV), 117–137 (TPML…FWIL), 153–173 (LHVL…IVIL), and 177–197 (WTPI…RNAW).

This sequence belongs to the cation diffusion facilitator (CDF) transporter (TC 2.A.4) family. SLC30A subfamily.

It localises to the cell inner membrane. Its function is as follows. Involved in zinc efflux across the cytoplasmic membrane, thus reducing zinc accumulation in the cytoplasm and rendering bacteria more resistant to zinc. It may contribute to zinc homeostasis at low concentrations of zinc. The chain is Zinc transporter ZitB from Yersinia pseudotuberculosis serotype I (strain IP32953).